Reading from the N-terminus, the 192-residue chain is dTTP/UTP pyrophosphatase (192 aa).

Asp-70 acts as the Proton acceptor in catalysis.

It belongs to the Maf family. YhdE subfamily. A divalent metal cation is required as a cofactor.

It is found in the cytoplasm. It catalyses the reaction dTTP + H2O = dTMP + diphosphate + H(+). It carries out the reaction UTP + H2O = UMP + diphosphate + H(+). Its function is as follows. Nucleoside triphosphate pyrophosphatase that hydrolyzes dTTP and UTP. May have a dual role in cell division arrest and in preventing the incorporation of modified nucleotides into cellular nucleic acids. The chain is dTTP/UTP pyrophosphatase from Alkaliphilus metalliredigens (strain QYMF).